The sequence spans 367 residues: Quinolinate synthase (367 aa).

The iminosuccinate site is built by His-45 and Ser-62. Cys-109 is a [4Fe-4S] cluster binding site. Residues 140–142 (YVN) and Ser-161 contribute to the iminosuccinate site. Cys-229 is a binding site for [4Fe-4S] cluster. Residues 255 to 257 (HPE) and Thr-272 contribute to the iminosuccinate site. Cys-319 is a [4Fe-4S] cluster binding site.

The protein belongs to the quinolinate synthase family. Type 3 subfamily. [4Fe-4S] cluster is required as a cofactor.

The protein localises to the cytoplasm. It carries out the reaction iminosuccinate + dihydroxyacetone phosphate = quinolinate + phosphate + 2 H2O + H(+). Its pathway is cofactor biosynthesis; NAD(+) biosynthesis; quinolinate from iminoaspartate: step 1/1. Functionally, catalyzes the condensation of iminoaspartate with dihydroxyacetone phosphate to form quinolinate. The sequence is that of Quinolinate synthase from Anoxybacillus flavithermus (strain DSM 21510 / WK1).